A 412-amino-acid polypeptide reads, in one-letter code: DnaJ homolog subfamily A member 2 (412 aa).

One can recognise a J domain in the interval 8-70; the sequence is KLYDILGVPP…EKRELYDRYG (63 aa). Lys39 carries the post-translational modification N6-acetyllysine. Residues Ser78 and Ser123 each carry the phosphoserine modification. A CR-type zinc finger spans residues 130–214; it reads GKTTKLQLSK…CEGKKVIKEV (85 aa). Lys134 participates in a covalent cross-link: Glycyl lysine isopeptide (Lys-Gly) (interchain with G-Cter in SUMO2). Residues Cys143 and Cys146 each contribute to the Zn(2+) site. Residues 143–150 form a CXXCXGXG motif repeat; sequence CSACSGQG. Lys152 bears the N6-acetyllysine mark. Zn(2+) is bound by residues Cys159, Cys162, Cys186, Cys189, Cys202, and Cys205. CXXCXGXG motif repeat units follow at residues 159-166, 186-193, and 202-209; these read CSACRGRG, CSDCNGEG, and CKKCEGKK. Residues 365 to 412 form a disordered region; it reads IGETEEVELQEFDSTRGSGGGQRREAYNDSSDEESSSHHGPGVQCAHQ. At Tyr391 the chain carries Phosphotyrosine. A phosphoserine mark is found at Ser394 and Ser395. Residue Cys409 is modified to Cysteine methyl ester. Cys409 is lipidated: S-farnesyl cysteine. The propeptide at 410–412 is removed in mature form; the sequence is AHQ.

The protein resides in the membrane. Its function is as follows. Co-chaperone of Hsc70. Stimulates ATP hydrolysis and the folding of unfolded proteins mediated by HSPA1A/B (in vitro). In Rattus norvegicus (Rat), this protein is DnaJ homolog subfamily A member 2 (Dnaja2).